Consider the following 399-residue polypeptide: Forkhead box protein I3 (399 aa).

Disordered stretches follow at residues 87-109 (AGAQ…GSAA), 221-287 (KRRR…ASTL), and 307-353 (SSSS…STVG). Positions 96–109 (PSASAPASPAGSAA) are enriched in low complexity. A phosphoserine mark is found at S99 and S103. Residues 129 to 223 (RPPYSYSALI…DNGNFRRKRR (95 aa)) constitute a DNA-binding region (fork-head). A Nuclear localization signal motif is present at residues 219–225 (RRKRRRR). Polar residues-rich tracts occupy residues 228 to 248 (ASSN…SSRL) and 258 to 267 (SPSSILRPSQ). S258, S266, and S268 each carry phosphoserine. Polar residues-rich tracts occupy residues 275-287 (TKST…ASTL), 307-317 (SSSSMGNQRTL), and 328-353 (QLPS…STVG). Positions 385 to 393 (SMVNSLIYP) match the 9aaTAD motif.

In terms of processing, phosphorylation promotes the transcription factor activity. Dephosphorylation by protein phosphatase 2A (PP2A) reduces its activity. In terms of tissue distribution, specifically expressed in the epithelium in developing ectodermal appendages. Expressed in pharyngeal endoderm and ectoderm. Expressed in pre-placodal ectoderm. Down-regulated as the otic placode is induced. Expressed in teeth and hair follicles throughout embryogenesis. Expressed in mammary glands only during the earliest stages of development.

The protein resides in the nucleus. In terms of biological role, transcription factor required for pharyngeal arch development, which is involved in hair, ear, jaw and dental development. May act as a pioneer transcription factor during pharyngeal arch development. Required for epithelial cell differentiation within the epidermis. Acts at multiple stages of otic placode induction: necessary for preplacodal ectoderm to execute an inner ear program. Required for hair follicle stem cell specification. Acts downstream of TBX1 for the formation of the thymus and parathyroid glands from the third pharyngeal pouch. This is Forkhead box protein I3 from Mus musculus (Mouse).